The primary structure comprises 284 residues: Probable ADP-ribose 1''-phosphate phosphatase YML087W (284 aa).

Positions 23, 55, 80, and 90 each coordinate substrate. The Macro domain occupies 34–230 (ESIPHAYIQN…HISKELKNVL (197 aa)). Active-site residues include N80 and D90. C128 and C136 are joined by a disulfide. H145 is an active-site residue. Residues T148 and T195 each contribute to the substrate site.

As to quaternary structure, homodimer.

The catalysed reaction is ADP-alpha-D-ribose 1''-phosphate + H2O = ADP-D-ribose + phosphate. Highly specific phosphatase involved in the metabolism of ADP-ribose 1''-phosphate (Appr1p) which is produced as a consequence of tRNA splicing. + phosphate. The protein is Probable ADP-ribose 1''-phosphate phosphatase YML087W of Saccharomyces cerevisiae (strain ATCC 204508 / S288c) (Baker's yeast).